Reading from the N-terminus, the 1050-residue chain is Nuclear pore complex-interacting protein family member B3 (1050 aa).

The helical transmembrane segment at 63-87 threads the bilayer; that stretch reads VIIAFPTSYKVVITLWIVYLWVSLL. 3 disordered regions span residues 241 to 262, 290 to 574, and 785 to 1050; these read NRMG…NSLS, LTPL…NIKT, and ERLR…RRLS. Residues 252 to 262 are compositionally biased toward polar residues; sequence QQHSITDNSLS. The segment covering 349–359 has biased composition (pro residues); it reads PLPPSALPSAP. 7 stretches are compositionally biased toward basic and acidic residues: residues 406-416, 448-458, 490-500, 528-538, 820-830, 862-872, and 904-914; these read DNIKTPAERLR.

Belongs to the NPIP family.

It localises to the membrane. The chain is Nuclear pore complex-interacting protein family member B3 (NPIPB3) from Homo sapiens (Human).